Consider the following 66-residue polypeptide: Large ribosomal subunit protein bL33c (66 aa).

The protein belongs to the bacterial ribosomal protein bL33 family.

It localises to the plastid. The protein resides in the chloroplast. The sequence is that of Large ribosomal subunit protein bL33c from Nicotiana sylvestris (Wood tobacco).